We begin with the raw amino-acid sequence, 67 residues long: MKEKLHPAYQKARIVCVCGAQFEVGSTKKEMRVDICSKCHPFYTGMQRTVETRGRADKFRRKYGLGK.

Zn(2+) is bound by residues cysteine 16, cysteine 18, cysteine 36, and cysteine 39.

It belongs to the bacterial ribosomal protein bL31 family. Type A subfamily. In terms of assembly, part of the 50S ribosomal subunit. The cofactor is Zn(2+).

Functionally, binds the 23S rRNA. The protein is Large ribosomal subunit protein bL31 of Desulforudis audaxviator (strain MP104C).